A 91-amino-acid polypeptide reads, in one-letter code: Elongation factor 1-beta (91 aa).

This sequence belongs to the EF-1-beta/EF-1-delta family.

Its function is as follows. Promotes the exchange of GDP for GTP in EF-1-alpha/GDP, thus allowing the regeneration of EF-1-alpha/GTP that could then be used to form the ternary complex EF-1-alpha/GTP/AAtRNA. The protein is Elongation factor 1-beta of Metallosphaera sedula (strain ATCC 51363 / DSM 5348 / JCM 9185 / NBRC 15509 / TH2).